A 70-amino-acid chain; its full sequence is Conotoxin Vc6.10 (70 aa).

The first 19 residues, 1 to 19 (MEKLTILLLVAAVLTSTQA), serve as a signal peptide directing secretion. A propeptide spanning residues 20–40 (LIQGGADERQKAKINFLSRSD) is cleaved from the precursor. Cystine bridges form between C43/C57, C50/C62, and C56/C69.

The protein belongs to the conotoxin O2 superfamily. In terms of tissue distribution, expressed by the venom duct.

The protein resides in the secreted. Functionally, inhibits voltage-gated ion channels. This Conus victoriae (Queen Victoria cone) protein is Conotoxin Vc6.10.